Consider the following 473-residue polypeptide: Argininosuccinate lyase (473 aa).

The protein belongs to the lyase 1 family. Argininosuccinate lyase subfamily.

It is found in the cytoplasm. It carries out the reaction 2-(N(omega)-L-arginino)succinate = fumarate + L-arginine. It participates in amino-acid biosynthesis; L-arginine biosynthesis; L-arginine from L-ornithine and carbamoyl phosphate: step 3/3. The polypeptide is Argininosuccinate lyase (Bordetella pertussis (strain Tohama I / ATCC BAA-589 / NCTC 13251)).